We begin with the raw amino-acid sequence, 118 residues long: Large ribosomal subunit protein uL18 (118 aa).

Belongs to the universal ribosomal protein uL18 family. As to quaternary structure, part of the 50S ribosomal subunit; part of the 5S rRNA/L5/L18/L25 subcomplex. Contacts the 5S and 23S rRNAs.

Its function is as follows. This is one of the proteins that bind and probably mediate the attachment of the 5S RNA into the large ribosomal subunit, where it forms part of the central protuberance. The chain is Large ribosomal subunit protein uL18 from Dichelobacter nodosus (strain VCS1703A).